The chain runs to 775 residues: K(+)-insensitive pyrophosphate-energized proton pump (775 aa).

Transmembrane regions (helical) follow at residues 9–29 (SLAV…AFFI), 65–85 (ISIL…IIPP), 108–128 (AVAF…GMNV), 160–180 (MLTV…FGIA), and 185–205 (LLGF…GGGI). Lys208 serves as a coordination point for substrate. Residues Asp211, Asp215, and Asp241 each coordinate Mg(2+). Transmembrane regions (helical) follow at residues 259–279 (VTLV…VGTI), 288–308 (FIIF…IGNL), 327–347 (FYIA…VFMV), 359–379 (FFAT…TEYF), 413–433 (SVWA…IYAG), and 442–462 (AILY…GNTI). Asp472 serves as a coordination point for Mg(2+). A run of 4 helical transmembrane segments spans residues 508 to 528 (IAIG…FTDV), 555 to 575 (PVFI…ALTI), 622 to 642 (LISL…TLGV), and 644 to 664 (ALGG…VFQA). 3 residues coordinate Ca(2+): Asp671, Asp697, and Asp701. Residue Lys704 coordinates substrate. 2 helical membrane-spanning segments follow: residues 710-730 (ALNP…PIVV) and 735-755 (GSPG…WAIW).

This sequence belongs to the H(+)-translocating pyrophosphatase (TC 3.A.10) family. K(+)-insensitive subfamily. Homodimer. The cofactor is Mg(2+).

It localises to the cell membrane. The enzyme catalyses diphosphate + H2O + H(+)(in) = 2 phosphate + 2 H(+)(out). Proton pump that utilizes the energy of pyrophosphate hydrolysis as the driving force for proton movement across the membrane. Generates a proton motive force. The polypeptide is K(+)-insensitive pyrophosphate-energized proton pump (Chloroflexus aurantiacus (strain ATCC 29366 / DSM 635 / J-10-fl)).